We begin with the raw amino-acid sequence, 34 residues long: uncharacterized protein (34 aa).

This is an uncharacterized protein from Acidianus two-tailed virus (ATV).